Consider the following 210-residue polypeptide: uncharacterized protein (210 aa).

Residues 2-91 (SRHPEVKWAQ…AEAKWWKKLV (90 aa)) enclose the CS domain. Residues 165–210 (GMGGMGGMDEFEDESDDEEEVSKPQDAEKAAEAGKSQESDAKTETS) form a disordered region. Positions 173-184 (DEFEDESDDEEE) are enriched in acidic residues. Basic and acidic residues predominate over residues 185-210 (VSKPQDAEKAAEAGKSQESDAKTETS).

This is an uncharacterized protein from Oryza sativa subsp. indica (Rice).